The chain runs to 294 residues: ATP synthase gamma chain (294 aa).

This sequence belongs to the ATPase gamma chain family. F-type ATPases have 2 components, CF(1) - the catalytic core - and CF(0) - the membrane proton channel. CF(1) has five subunits: alpha(3), beta(3), gamma(1), delta(1), epsilon(1). CF(0) has three main subunits: a, b and c.

The protein resides in the cell membrane. Produces ATP from ADP in the presence of a proton gradient across the membrane. The gamma chain is believed to be important in regulating ATPase activity and the flow of protons through the CF(0) complex. The chain is ATP synthase gamma chain from Opitutus terrae (strain DSM 11246 / JCM 15787 / PB90-1).